A 1078-amino-acid polypeptide reads, in one-letter code: Nonribosomal peptide synthetase aneB (1078 aa).

An adenylation region spans residues F20 to I417. The 77-residue stretch at M559–P635 folds into the Carrier domain. S596 is subject to O-(pantetheine 4'-phosphoryl)serine. The interval N699–T1013 is condensation.

It belongs to the NRP synthetase family.

The enzyme catalyses holo-[peptidyl-carrier protein] + L-proline + ATP = L-prolyl-[peptidyl-carrier protein] + AMP + diphosphate. The protein operates within secondary metabolite biosynthesis. Its function is as follows. Nonribosomal peptide synthetase; part of the gene cluster that mediates the biosynthesis of aculenes, a unique type of norsesquiterpenes that contain a nordaucane skeleton linked to an L-proline moiety and are of mixed biosynthetic origin. The pathway begins with the synthesis of dauca-4,7-diene by the terpene cyclase aneC using farnesyl pyrophosphate (FPP) as substrate. The cytochrome P450 monooxygenase aneF then performs the initial oxidation at C-12 of dauca-4,7-diene to yield asperaculane D. Asperaculane D is substrate of the cytochrome P450 monooxygenase aneD for C-10 hydroxylation to yield asperaculane E. The cytochrome P450 monooxygenase aneG then converts asperaculane E into aculene D via C-2 oxidation. The monomodular nonribosomal peptide synthase aneB adenylates L-proline and the thiohydrolase aneE transfers this activated L-proline derivative to aculenes D and C to produce respectively aculenes B and A. The dioxygenase aneA converts aculene D into aculene C, and aculene B into aculene A by introducing the 5,6-alkene moiety. Asperculanes A, B, C and F, as well as 14-prolyl asperculane C, might be shunt products of the pathway. The polypeptide is Nonribosomal peptide synthetase aneB (Aspergillus aculeatus (strain ATCC 16872 / CBS 172.66 / WB 5094)).